Consider the following 337-residue polypeptide: Glyceraldehyde-3-phosphate dehydrogenase 2 (337 aa).

Residues 11 to 12, Asp35, Arg79, and Thr121 contribute to the NAD(+) site; that span reads RI. D-glyceraldehyde 3-phosphate-binding positions include 153–155, Thr184, Arg199, 212–213, and Arg235; these read SCT and TG. Cys154 (nucleophile) is an active-site residue. Asn317 serves as a coordination point for NAD(+).

The protein belongs to the glyceraldehyde-3-phosphate dehydrogenase family. As to quaternary structure, homotetramer.

Its subcellular location is the cytoplasm. It catalyses the reaction D-glyceraldehyde 3-phosphate + phosphate + NADP(+) = (2R)-3-phospho-glyceroyl phosphate + NADPH + H(+). It carries out the reaction D-glyceraldehyde 3-phosphate + phosphate + NAD(+) = (2R)-3-phospho-glyceroyl phosphate + NADH + H(+). It functions in the pathway carbohydrate degradation; glycolysis; pyruvate from D-glyceraldehyde 3-phosphate: step 1/5. Functionally, involved in photosynthetic carbon assimilation. Catalyzes the NAD(P)-dependent oxidative phosphorylation of glyceraldehyde 3-phosphate (G3P) to 1,3-bisphosphoglycerate (BPG). The first reaction step involves the formation of a hemiacetal intermediate between G3P and a cysteine residue, and this hemiacetal intermediate is then oxidized to a thioester, with concomitant reduction of NAD to NADH. The reduced NADH is then exchanged with the second NAD, and the thioester is attacked by a nucleophilic inorganic phosphate to produce BPG. It can use both NADP and NAD. In Synechocystis sp. (strain ATCC 27184 / PCC 6803 / Kazusa), this protein is Glyceraldehyde-3-phosphate dehydrogenase 2 (gap2).